Here is a 418-residue protein sequence, read N- to C-terminus: Serine hydroxymethyltransferase (418 aa).

(6S)-5,6,7,8-tetrahydrofolate contacts are provided by residues L121 and 125-127; that span reads GHL. K230 is subject to N6-(pyridoxal phosphate)lysine. 356–358 is a binding site for (6S)-5,6,7,8-tetrahydrofolate; it reads SPF.

This sequence belongs to the SHMT family. Homodimer. Pyridoxal 5'-phosphate serves as cofactor.

It is found in the cytoplasm. It carries out the reaction (6R)-5,10-methylene-5,6,7,8-tetrahydrofolate + glycine + H2O = (6S)-5,6,7,8-tetrahydrofolate + L-serine. It participates in one-carbon metabolism; tetrahydrofolate interconversion. The protein operates within amino-acid biosynthesis; glycine biosynthesis; glycine from L-serine: step 1/1. Its function is as follows. Catalyzes the reversible interconversion of serine and glycine with tetrahydrofolate (THF) serving as the one-carbon carrier. This reaction serves as the major source of one-carbon groups required for the biosynthesis of purines, thymidylate, methionine, and other important biomolecules. Also exhibits THF-independent aldolase activity toward beta-hydroxyamino acids, producing glycine and aldehydes, via a retro-aldol mechanism. The sequence is that of Serine hydroxymethyltransferase from Shewanella halifaxensis (strain HAW-EB4).